Consider the following 129-residue polypeptide: Lysozyme C (129 aa).

In terms of domain architecture, C-type lysozyme spans 1 to 129; it reads KVFGRCELAA…VHAWIRGCRL (129 aa). 4 cysteine pairs are disulfide-bonded: Cys6/Cys127, Cys30/Cys115, Cys64/Cys80, and Cys76/Cys94. Active-site residues include Glu35 and Asp52.

The protein belongs to the glycosyl hydrolase 22 family. Monomer.

It localises to the secreted. The enzyme catalyses Hydrolysis of (1-&gt;4)-beta-linkages between N-acetylmuramic acid and N-acetyl-D-glucosamine residues in a peptidoglycan and between N-acetyl-D-glucosamine residues in chitodextrins.. In terms of biological role, lysozymes have primarily a bacteriolytic function; those in tissues and body fluids are associated with the monocyte-macrophage system and enhance the activity of immunoagents. This is Lysozyme C (LYZ) from Callipepla californica (California quail).